Consider the following 102-residue polypeptide: Monothiol glutaredoxin-S10 (102 aa).

The 101-residue stretch at 1-101 (MDVVARLASQ…ILLKEAGALW (101 aa)) folds into the Glutaredoxin domain. Cysteine 21 contributes to the [2Fe-2S] cluster binding site. A Responsive for interaction with TGA factors motif is present at residues 99–102 (ALWL).

The protein belongs to the glutaredoxin family. CC-type subfamily.

It localises to the cytoplasm. The protein resides in the nucleus. May only reduce GSH-thiol disulfides, but not protein disulfides. The chain is Monothiol glutaredoxin-S10 (GRXS10) from Arabidopsis thaliana (Mouse-ear cress).